The chain runs to 64 residues: Probable cytochrome c oxidase subunit 5C-1 (64 aa).

A helical transmembrane segment spans residues 15–34 (SVVKELFIGLALGLAAGGLW).

Belongs to the cytochrome c oxidase subunit 5C family.

The protein resides in the mitochondrion inner membrane. This protein is one of the nuclear-coded polypeptide chains of cytochrome c oxidase, the terminal oxidase in mitochondrial electron transport. This chain is Probable cytochrome c oxidase subunit 5C-1, found in Arabidopsis thaliana (Mouse-ear cress).